Consider the following 444-residue polypeptide: Tol-Pal system protein TolB (444 aa).

The signal sequence occupies residues 1–19; that stretch reads MRNIIYFILSLLFSVTSYA.

It belongs to the TolB family. In terms of assembly, the Tol-Pal system is composed of five core proteins: the inner membrane proteins TolA, TolQ and TolR, the periplasmic protein TolB and the outer membrane protein Pal. They form a network linking the inner and outer membranes and the peptidoglycan layer.

It localises to the periplasm. Part of the Tol-Pal system, which plays a role in outer membrane invagination during cell division and is important for maintaining outer membrane integrity. The chain is Tol-Pal system protein TolB from Rickettsia rickettsii (strain Sheila Smith).